The chain runs to 182 residues: Large ribosomal subunit protein uL5c (182 aa).

The protein belongs to the universal ribosomal protein uL5 family. In terms of assembly, part of the 50S ribosomal subunit; contacts the 5S rRNA.

The protein resides in the plastid. The protein localises to the chloroplast. In terms of biological role, binds 5S rRNA, forms part of the central protuberance of the 50S subunit. In Emiliania huxleyi (Coccolithophore), this protein is Large ribosomal subunit protein uL5c (rpl5).